Reading from the N-terminus, the 631-residue chain is Probable glutamate--tRNA ligase, cytoplasmic (631 aa).

An L-glutamate-binding site is contributed by 139-141 (RFP). Positions 144-153 (PSGFLHIGHI) match the 'HIGH' region motif. Residue histidine 149 participates in ATP binding. L-glutamate is bound by residues aspartate 173, 311–315 (YDFAC), and arginine 329. Residues glutamate 332 and 367–371 (VLSKR) each bind ATP. The 'KMSKS' region signature appears at 367-371 (VLSKR).

It belongs to the class-I aminoacyl-tRNA synthetase family. Glutamate--tRNA ligase type 2 subfamily.

It localises to the cytoplasm. It carries out the reaction tRNA(Glu) + L-glutamate + ATP = L-glutamyl-tRNA(Glu) + AMP + diphosphate. This chain is Probable glutamate--tRNA ligase, cytoplasmic, found in Enterocytozoon bieneusi (strain H348) (Microsporidian parasite).